The following is a 153-amino-acid chain: Superoxide dismutase [Cu-Zn] (153 aa).

Residue Asn24 is glycosylated (N-linked (GlcNAc...) asparagine). His47, His49, and His64 together coordinate Cu cation. A disulfide bridge connects residues Cys58 and Cys147. Residues His64, His72, His81, and Asp84 each coordinate Zn(2+). A Cu cation-binding site is contributed by His121. A compositionally biased stretch (basic and acidic residues) spans 126-137 (DLGRGGNEESKK). The disordered stretch occupies residues 126 to 145 (DLGRGGNEESKKTGNAGPRP). Arg144 contributes to the substrate binding site.

Belongs to the Cu-Zn superoxide dismutase family. Homodimer. The cofactor is Cu cation. It depends on Zn(2+) as a cofactor.

The protein localises to the cytoplasm. The catalysed reaction is 2 superoxide + 2 H(+) = H2O2 + O2. In terms of biological role, destroys radicals which are normally produced within the cells and which are toxic to biological systems. This chain is Superoxide dismutase [Cu-Zn], found in Humicola lutea.